A 128-amino-acid chain; its full sequence is MVERIEDLNLPNAVIGRLIKEALPESASVSKEARAAIARAASVFAIFVTSSSTALAHKQNHKTITAKDILQTLTELDFESFVPSLTQDLEVYRKVVKEKKESKASKKDSNTAENANASATATAEEAPE.

The segment covering 98-110 has biased composition (basic and acidic residues); the sequence is EKKESKASKKDSN. The segment at 98–128 is disordered; sequence EKKESKASKKDSNTAENANASATATAEEAPE. Low complexity predominate over residues 111–128; the sequence is TAENANASATATAEEAPE.

Homodimer. Component of the DNA polymerase epsilon complex consisting of four subunits: the catalytic subunit PolE1/DNApol-epsilon255 and the accessory subunits PolE2/DNApol-epsilon58, Chrac-14/DNApolE3 and PolE4. Component of the chromatin accessibility complex (CHRAC), composed of Chrac-14, Chrac-16, Acf and Iswi. Forms an heterodimer with Chrac-16. The Chrac-14/Chrac-16 heterodimer interacts with Acf (via N-terminus). Interacts directly with Iswi and this interaction is further stabilized by association with Chrac-16. Component of the Ada2a-containing (ATAC) complex composed of at least Ada2a, Atac1, Hcf, Ada3, Gcn5, Mocs2B, Charac-14, Atac3, Atac2, NC2beta and wds. Interacts with cid.

The protein resides in the nucleus. Accessory component of the DNA polymerase epsilon complex. Participates in DNA repair and in chromosomal DNA replication. Histone-like protein which promotes nucleosome sliding of ATP-dependent nucleosome remodeling complexes. Part of the chromatin-accessibility complex (CHRAC) which uses energy/ATP to increase the general accessibility of DNA in chromatin. As a heterodimer with Chrac-16, binds DNA and facilitates nucleosome sliding by Acf. Has a role in DNA damage response by preventing cid mislocalization to chromatin. The sequence is that of DNA polymerase epsilon subunit 3 from Drosophila melanogaster (Fruit fly).